Consider the following 447-residue polypeptide: Phosphoglucosamine mutase (447 aa).

Serine 102 serves as the catalytic Phosphoserine intermediate. The Mg(2+) site is built by serine 102, aspartate 241, aspartate 243, and aspartate 245. Serine 102 carries the phosphoserine modification.

This sequence belongs to the phosphohexose mutase family. Mg(2+) is required as a cofactor. Activated by phosphorylation.

It catalyses the reaction alpha-D-glucosamine 1-phosphate = D-glucosamine 6-phosphate. Its function is as follows. Catalyzes the conversion of glucosamine-6-phosphate to glucosamine-1-phosphate. The protein is Phosphoglucosamine mutase of Pseudomonas syringae pv. syringae (strain B728a).